We begin with the raw amino-acid sequence, 1321 residues long: Bile salt export pump (1321 aa).

The Cytoplasmic segment spans residues 1 to 62 (MSDSVILRSI…FSSSTDIWLM (62 aa)). Positions 16–37 (ENDGFESDKSYNNDKKSRLQDE) are disordered. Positions 21-37 (ESDKSYNNDKKSRLQDE) are enriched in basic and acidic residues. The 324-residue stretch at 62 to 385 (MFVGSLCAFL…ASPCLEAFAT (324 aa)) folds into the ABC transmembrane type-1 1 domain. A helical membrane pass occupies residues 63–83 (FVGSLCAFLHGIAQPGVLLIF). At 84 to 147 (GTMTDVFIDY…MIKFASYYAG (64 aa)) the chain is on the extracellular side. Residues N109, N116, N122, and N125 are each glycosylated (N-linked (GlcNAc...) asparagine). A helical membrane pass occupies residues 148–168 (IAVAVLITGYIQICFWVIAAA). Over 169–215 (RQIQKMRKFYFRRIMRMEIGWFDCNSVGELNTRFSDDINKINDAIAD) the chain is Cytoplasmic. Residues 216-236 (QMALFIQRMTSTICGFLLGFF) traverse the membrane as a helical segment. Residues 237 to 240 (RGWK) are Extracellular-facing. A helical membrane pass occupies residues 241–261 (LTLVIISVSPLIGIGAATIGL). The Cytoplasmic segment spans residues 262–319 (SVSKFTDYELKAYAKAGVVADEVISSMRTVAAFGGEKREVERYEKNLVFAQRWGIRKG). A helical transmembrane segment spans residues 320-340 (IVMGFFTGFVWCLIFLCYALA). The Extracellular portion of the chain corresponds to 341–353 (FWYGSTLVLDEGE). The chain crosses the membrane as a helical span at residues 354 to 374 (YTPGTLVQIFLSVIVGALNLG). At 375–755 (NASPCLEAFA…KFSAPEWPYM (381 aa)) the chain is on the cytoplasmic side. Residues 420–656 (IEFHNVTFHY…KGVYFTLVTL (237 aa)) enclose the ABC transporter 1 domain. 455–462 (GPSGAGKS) contributes to the ATP binding site. Position 586 is a phosphothreonine (T586). S587 is subject to Phosphoserine. Residues 651 to 672 (FTLVTLQSQGNQALNEEDIKDA) form an interaction with HAX1 region. Phosphoserine occurs at positions 690, 701, and 704. Positions 755 to 1043 (MLVGSVGAAV…AFSYTPSYAK (289 aa)) constitute an ABC transmembrane type-1 2 domain. The helical transmembrane segment at 756-776 (LVGSVGAAVNGTVTPLYAFLF) threads the bilayer. Over 777–794 (SQILGTFSIPDKEEQRSQ) the chain is Extracellular. Residues 795-815 (INGVCLLFVAMGCVSLFTQFL) form a helical membrane-spanning segment. At 816-869 (QGYAFAKSGELLTKRLRKFGFRAMLGQDIAWFDDLRNSPGALTTRLATDASQVQ) the chain is on the cytoplasmic side. The next 2 helical transmembrane spans lie at 870 to 890 (GAAG…TVAM) and 891 to 911 (IIAF…FPFL). Topologically, residues 912 to 979 (ALSGATQTRM…PFKTAIQKAN (68 aa)) are cytoplasmic. A helical transmembrane segment spans residues 980–1000 (IYGFCFAFAQCIMFIANSASY). Residues 1001–1011 (RYGGYLISNEG) are Extracellular-facing. The helical transmembrane segment at 1012 to 1032 (LHFSYVFRVISAVVLSATALG) threads the bilayer. Residues 1033–1321 (RAFSYTPSYA…KLVTTGSPIS (289 aa)) are Cytoplasmic-facing. In terms of domain architecture, ABC transporter 2 spans 1078 to 1316 (IDFVDCKFTY…KGAYYKLVTT (239 aa)). Residue 1113–1120 (GSSGCGKS) participates in ATP binding. Phosphoserine is present on S1214. The segment at 1311 to 1314 (YKLV) is mediates internalization from the plasma membrane. S1321 is modified (phosphoserine).

This sequence belongs to the ABC transporter superfamily. ABCB family. Multidrug resistance exporter (TC 3.A.1.201) subfamily. Interacts with HAX1. Interacts with the adapter protein complex 2 (AP-2) throught AP2A2 or AP2A1; this interaction regulates cell membrane expression of ABCB11 through its internalization in a clathrin-dependent manner and its subsequent degradation. N-glycosylated. Post-translationally, ubiquitinated; short-chain ubiquitination regulates cell-Surface expression of ABCB11. In terms of tissue distribution, expressed predominantly, if not exclusively in the liver, where it was further localized to the canalicular microvilli and to subcanalicular vesicles of the hepatocytes by in situ.

The protein resides in the apical cell membrane. It localises to the recycling endosome membrane. The protein localises to the endosome. It is found in the cell membrane. It catalyses the reaction cholate(in) + ATP + H2O = cholate(out) + ADP + phosphate + H(+). The enzyme catalyses taurocholate(in) + ATP + H2O = taurocholate(out) + ADP + phosphate + H(+). It carries out the reaction glycocholate(in) + ATP + H2O = glycocholate(out) + ADP + phosphate + H(+). The catalysed reaction is glycochenodeoxycholate(in) + ATP + H2O = glycochenodeoxycholate(out) + ADP + phosphate + H(+). It catalyses the reaction taurochenodeoxycholate(in) + ATP + H2O = taurochenodeoxycholate(out) + ADP + phosphate + H(+). The enzyme catalyses glycoursodeoxycholate(in) + ATP + H2O = glycoursodeoxycholate(out) + ADP + phosphate + H(+). It carries out the reaction tauroursodeoxycholate(in) + ATP + H2O = tauroursodeoxycholate(out) + ADP + phosphate + H(+). The catalysed reaction is taurodeoxycholate(in) + ATP + H2O = taurodeoxycholate(out) + ADP + phosphate + H(+). It catalyses the reaction taurolithocholate 3-sulfate(in) + ATP + H2O = taurolithocholate 3-sulfate(out) + ADP + phosphate + H(+). The enzyme catalyses pravastatin(in) + ATP + H2O = pravastatin(out) + ADP + phosphate + H(+). The uptake of taurocholate is inhibited by taurolithocholate sulfate with an IC(50) of 9 uM. Pravastatin competitively inhibits the transport of taurocholic acid. Cyclosporin A, glibenclamide, rifampicin and troglitazonestrongly competitively inhibit the transport activity of taurocholate. The canalicular transport activity of taurocholate is strongly dependent on canalicular membrane cholesterol content. The uptake of taurocholate is increased by short- and medium-chain fatty acids. Cholesterol increases transport capacity of taurocholate without affecting the affinity for the substrate. Catalyzes the transport of the major hydrophobic bile salts, such as taurine and glycine-conjugated cholic acid across the canalicular membrane of hepatocytes in an ATP-dependent manner, therefore participates in hepatic bile acid homeostasis and consequently to lipid homeostasis through regulation of biliary lipid secretion in a bile salts dependent manner. Transports taurine-conjugated bile salts more rapidly than glycine-conjugated bile salts. Also transports non-bile acid compounds, such as pravastatin and fexofenadine in an ATP-dependent manner and may be involved in their biliary excretion. This chain is Bile salt export pump, found in Homo sapiens (Human).